Here is a 2322-residue protein sequence, read N- to C-terminus: Protein sidekick homolog (2322 aa).

The signal sequence occupies residues 1–26 (MNYRIFLLFCTTTVLWSVVSTQLVLG). At 27-2020 (KPPIFQNTGP…IPDDPFYTTW (1994 aa)) the chain is on the extracellular side. 3 Ig-like C2-type domains span residues 28 to 105 (PPIF…AAIS), 217 to 319 (PSLQ…AYLT), and 324 to 397 (PVLK…ADMS). Intrachain disulfides connect cysteine 52–cysteine 94, cysteine 247–cysteine 301, and cysteine 345–cysteine 386. Asparagine 408 is a glycosylation site (N-linked (GlcNAc...) asparagine). 2 consecutive Ig-like C2-type domains span residues 450 to 545 (PFTS…VQVN) and 548 to 639 (SLIE…AMLQ). Cystine bridges form between cysteine 481–cysteine 529 and cysteine 569–cysteine 623. 2 N-linked (GlcNAc...) asparagine glycosylation sites follow: asparagine 633 and asparagine 656. Fibronectin type-III domains are found at residues 646–752 (MPER…MPQQ), 757–854 (APRN…TAEG), 859–958 (APKN…TEED), 962–1056 (AVDE…VPPE), 1060–1155 (RPSM…TLQT), 1160–1255 (PSQR…TYES), 1260–1360 (SPRN…TLED), 1364–1458 (PPES…SSVR), 1464–1567 (APAP…TLPS), 1572–1672 (QPIS…VGYS), 1674–1774 (PKRN…LEDK), 1777–1873 (PVGV…SKDG), and 1908–2010 (QAKR…VPES). The segment at 732 to 762 (SNKHGPGKPSLPSSSVTMPQQPPSAAPRNVA) is disordered. Asparagine 808, asparagine 869, asparagine 933, and asparagine 1017 each carry an N-linked (GlcNAc...) asparagine glycan. Over residues 1040–1049 (GDGPVEETKF) the composition is skewed to basic and acidic residues. The segment at 1040–1060 (GDGPVEETKFESGVPPELPGR) is disordered. Asparagine 1108 is a glycosylation site (N-linked (GlcNAc...) asparagine). The tract at residues 1139–1163 (GRGAPSEPSRTFETLQTNPETPSQR) is disordered. Over residues 1146-1163 (PSRTFETLQTNPETPSQR) the composition is skewed to polar residues. Residues asparagine 1615, asparagine 1677, and asparagine 1864 are each glycosylated (N-linked (GlcNAc...) asparagine). The tract at residues 1916–1965 (EETENGYVSQRPRRNEIRGAKSAAQTSASSNSNRPTHPIGEWITLRPTDG) is disordered. The segment covering 1935-1947 (AKSAAQTSASSNS) has biased composition (low complexity). A helical membrane pass occupies residues 2021 to 2041 (WFMALVAMAAFVLIVIIIAIL). Residues 2042–2322 (CVTGSSAKYR…NLTAGFSSFV (281 aa)) are Cytoplasmic-facing. 3 disordered regions span residues 2081–2114 (NMTR…SVLG), 2167–2254 (YVVS…ADDI), and 2276–2322 (MVRA…SSFV). The segment covering 2092 to 2101 (PGTTQSWLSD) has biased composition (polar residues). Residues 2207–2223 (PSSSGGSQPQGSPQQQQ) are compositionally biased toward low complexity. The span at 2227 to 2238 (DSFDEEDDVDDD) shows a compositional bias: acidic residues. 2 stretches are compositionally biased toward polar residues: residues 2282 to 2302 (LTNQ…STSE) and 2310 to 2322 (ATPN…SSFV).

This sequence belongs to the sidekick family.

It is found in the membrane. Cell adhesion protein. This is Protein sidekick homolog (rig-4) from Caenorhabditis briggsae.